The sequence spans 448 residues: MKIYNTYSRQLEDFQPIEPGKVKMYVCGPTVYNYIHVGNARSVVAFDLVRKYLEFRGFEVQYISNFTDVDDKIINGAKAANMTTTDFSERYIAAFYEDTDALNVKRASQNPKATEFIEAMIEFIQELVDKEFAYVSQGDVYFRVSKSKDYAKLANKNLADLLAGASGRTDEETKLKESPADFALWKSAKADEVSWQAPWGAGRPGWHIECSVMSTSLLGETIDIHGGGADLEFPHHTNEIAQSEAKTGQKFVNYWMHNGFVNVDGEKMSKSLGNFTTVHELLQVVNPQILRFFLATTHYRRPVNFTDDALTEAENNIKKIENAYRHLDEQAESNLSALTTFRNDFVAAMDEDFNIANGMTVFYDFVSWVNKGNGGPEVKEFFDQVLEILGIKFKFEQSLDSEIEAMIEARQLAREVRDFAKSDEIRDALKAQGIVLEDTKDGVRWHRE.

Cys27 contributes to the Zn(2+) binding site. The 'HIGH' region motif lies at 29–39 (PTVYNYIHVGN). The Zn(2+) site is built by Cys210, His235, and Glu239. A 'KMSKS' region motif is present at residues 267–271 (KMSKS). Residue Lys270 participates in ATP binding.

This sequence belongs to the class-I aminoacyl-tRNA synthetase family. Monomer. Requires Zn(2+) as cofactor.

Its subcellular location is the cytoplasm. The catalysed reaction is tRNA(Cys) + L-cysteine + ATP = L-cysteinyl-tRNA(Cys) + AMP + diphosphate. The chain is Cysteine--tRNA ligase from Lactococcus lactis subsp. lactis (strain IL1403) (Streptococcus lactis).